The sequence spans 129 residues: Small ribosomal subunit protein uS8 (129 aa).

This sequence belongs to the universal ribosomal protein uS8 family. Part of the 30S ribosomal subunit. Contacts proteins S5 and S12.

One of the primary rRNA binding proteins, it binds directly to 16S rRNA central domain where it helps coordinate assembly of the platform of the 30S subunit. In Mycoplasma mycoides subsp. mycoides SC (strain CCUG 32753 / NCTC 10114 / PG1), this protein is Small ribosomal subunit protein uS8.